Here is a 60-residue protein sequence, read N- to C-terminus: Large ribosomal subunit protein uL30 (60 aa).

This sequence belongs to the universal ribosomal protein uL30 family. As to quaternary structure, part of the 50S ribosomal subunit.

The polypeptide is Large ribosomal subunit protein uL30 (Kineococcus radiotolerans (strain ATCC BAA-149 / DSM 14245 / SRS30216)).